Consider the following 364-residue polypeptide: tRNA 2-selenouridine synthase (364 aa).

One can recognise a Rhodanese domain in the interval 14-137 (LIADTPIIDV…LRQTAIQATI (124 aa)). Cys97 functions as the S-selanylcysteine intermediate in the catalytic mechanism.

It belongs to the SelU family. In terms of assembly, monomer.

It catalyses the reaction 5-methylaminomethyl-2-thiouridine(34) in tRNA + selenophosphate + (2E)-geranyl diphosphate + H2O + H(+) = 5-methylaminomethyl-2-selenouridine(34) in tRNA + (2E)-thiogeraniol + phosphate + diphosphate. The enzyme catalyses 5-methylaminomethyl-2-thiouridine(34) in tRNA + (2E)-geranyl diphosphate = 5-methylaminomethyl-S-(2E)-geranyl-thiouridine(34) in tRNA + diphosphate. The catalysed reaction is 5-methylaminomethyl-S-(2E)-geranyl-thiouridine(34) in tRNA + selenophosphate + H(+) = 5-methylaminomethyl-2-(Se-phospho)selenouridine(34) in tRNA + (2E)-thiogeraniol. It carries out the reaction 5-methylaminomethyl-2-(Se-phospho)selenouridine(34) in tRNA + H2O = 5-methylaminomethyl-2-selenouridine(34) in tRNA + phosphate. Functionally, involved in the post-transcriptional modification of the uridine at the wobble position (U34) of tRNA(Lys), tRNA(Glu) and tRNA(Gln). Catalyzes the conversion of 2-thiouridine (S2U-RNA) to 2-selenouridine (Se2U-RNA). Acts in a two-step process involving geranylation of 2-thiouridine (S2U) to S-geranyl-2-thiouridine (geS2U) and subsequent selenation of the latter derivative to 2-selenouridine (Se2U) in the tRNA chain. This Escherichia coli (strain SE11) protein is tRNA 2-selenouridine synthase.